The chain runs to 67 residues: ATP synthase F(0) complex subunit 8 (67 aa).

A helical transmembrane segment spans residues 8–24 (TWFTTILATITTLFILF). The residue at position 54 (lysine 54) is an N6-acetyllysine; alternate. Lysine 54 carries the post-translational modification N6-succinyllysine; alternate. The residue at position 57 (lysine 57) is an N6-acetyllysine.

It belongs to the ATPase protein 8 family. In terms of assembly, component of the ATP synthase complex composed at least of ATP5F1A/subunit alpha, ATP5F1B/subunit beta, ATP5MC1/subunit c (homooctomer), MT-ATP6/subunit a, MT-ATP8/subunit 8, ATP5ME/subunit e, ATP5MF/subunit f, ATP5MG/subunit g, ATP5MK/subunit k, ATP5MJ/subunit j, ATP5F1C/subunit gamma, ATP5F1D/subunit delta, ATP5F1E/subunit epsilon, ATP5PF/subunit F6, ATP5PB/subunit b, ATP5PD/subunit d, ATP5PO/subunit OSCP. ATP synthase complex consists of a soluble F(1) head domain (subunits alpha(3) and beta(3)) - the catalytic core - and a membrane F(0) domain - the membrane proton channel (subunits c, a, 8, e, f, g, k and j). These two domains are linked by a central stalk (subunits gamma, delta, and epsilon) rotating inside the F1 region and a stationary peripheral stalk (subunits F6, b, d, and OSCP). Interacts with PRICKLE3.

The protein localises to the mitochondrion membrane. Subunit 8, of the mitochondrial membrane ATP synthase complex (F(1)F(0) ATP synthase or Complex V) that produces ATP from ADP in the presence of a proton gradient across the membrane which is generated by electron transport complexes of the respiratory chain. ATP synthase complex consist of a soluble F(1) head domain - the catalytic core - and a membrane F(1) domain - the membrane proton channel. These two domains are linked by a central stalk rotating inside the F(1) region and a stationary peripheral stalk. During catalysis, ATP synthesis in the catalytic domain of F(1) is coupled via a rotary mechanism of the central stalk subunits to proton translocation. In vivo, can only synthesize ATP although its ATP hydrolase activity can be activated artificially in vitro. Part of the complex F(0) domain. The chain is ATP synthase F(0) complex subunit 8 from Talpa europaea (European mole).